The sequence spans 214 residues: MSVPQIHVEEVGAEEGAGAAAPPDDHLRSLKALTEKLRLETRRPSYLEWQARLEEHTWPFPRPAAEPQASLEEGERGGQEPLLPLREAGQHPPSARSASQGARPLSTGKLEGFQSIDEAIAWLRKELTEMRLQDQQLARQLMRLRGDINKLKIEHTCRLHRRMLNDATYELEERDELADLFCDSPLASSFSLSTPLKLIGVTKMNINSRRFSLC.

Disordered regions lie at residues 1–26 (MSVP…PDDH) and 59–108 (PFPR…LSTG). A coiled-coil region spans residues 118-156 (EAIAWLRKELTEMRLQDQQLARQLMRLRGDINKLKIEHT).

It belongs to the FAM167 (SEC) family. As to expression, expressed in skin, including primary keratinocytes, spleen, kidney, leukocytes, testis, lung, small intestine and prostate.

In Homo sapiens (Human), this protein is Protein FAM167A (FAM167A).